Reading from the N-terminus, the 461-residue chain is Chromosomal replication initiator protein DnaA (461 aa).

The domain I, interacts with DnaA modulators stretch occupies residues 1 to 87 (MAVSLWQQCI…IGSRPSAKPV (87 aa)). A domain II region spans residues 87 to 124 (VVQATAAIRPKPAASKAVEKPTFNAPQAEPAITANHRS). A domain III, AAA+ region region spans residues 125 to 341 (NINPTYQFDN…GALNRVIANA (217 aa)). ATP-binding residues include G169, G171, K172, and T173. Residues 342–461 (NFTGRPITID…YANLIRTLSS (120 aa)) form a domain IV, binds dsDNA region.

It belongs to the DnaA family. In terms of assembly, oligomerizes as a right-handed, spiral filament on DNA at oriC.

The protein localises to the cytoplasm. In terms of biological role, plays an essential role in the initiation and regulation of chromosomal replication. ATP-DnaA binds to the origin of replication (oriC) to initiate formation of the DNA replication initiation complex once per cell cycle. Binds the DnaA box (a 9 base pair repeat at the origin) and separates the double-stranded (ds)DNA. Forms a right-handed helical filament on oriC DNA; dsDNA binds to the exterior of the filament while single-stranded (ss)DNA is stabiized in the filament's interior. The ATP-DnaA-oriC complex binds and stabilizes one strand of the AT-rich DNA unwinding element (DUE), permitting loading of DNA polymerase. After initiation quickly degrades to an ADP-DnaA complex that is not apt for DNA replication. Binds acidic phospholipids. This chain is Chromosomal replication initiator protein DnaA, found in Shewanella piezotolerans (strain WP3 / JCM 13877).